The following is a 353-amino-acid chain: (-)-beta-caryophyllene synthase ((2E,6E)-farnesyl diphosphate cyclizing) (353 aa).

Mg(2+) contacts are provided by D85 and D89. Residues 85–89 carry the DDXXD motif motif; it reads DDQFD. Position 179 (R179) interacts with substrate. Residues N225 and S229 each contribute to the Mg(2+) site. K232 lines the substrate pocket. E233 is a Mg(2+) binding site. 320–321 contributes to the substrate binding site; it reads RF.

The protein belongs to the terpene synthase family. The cofactor is Mg(2+).

It carries out the reaction (2E,6E)-farnesyl diphosphate = (-)-(E)-beta-caryophyllene + diphosphate. The protein operates within secondary metabolite biosynthesis; terpenoid biosynthesis. Catalyzes the conversion of (2E,6E)-farnesyl diphosphate (FPP) to yield the bicyclic sesquiterpene (2S,10R)-(-)-(E)-beta-caryophyllene via a probable 1,10-cyclization, which could involve the abstraction of the pyrophosphate from FPP to yield a (E,E)-germacradienyl cation. This is (-)-beta-caryophyllene synthase ((2E,6E)-farnesyl diphosphate cyclizing) (ptlA) from Saccharothrix espanaensis (strain ATCC 51144 / DSM 44229 / JCM 9112 / NBRC 15066 / NRRL 15764).